The primary structure comprises 1485 residues: Sex-determining transformer protein 2 (1485 aa).

Positions 1 to 28 (MSLRSNKLLVAAVIFTVVTFGLLLTSSI) are cleaved as a signal peptide. Helical transmembrane passes span 438–458 (VVYF…FFAW), 490–510 (IELN…NTYL), 584–604 (WPFI…FVDI), 732–752 (GILL…VMLI), 923–943 (LLAS…FSIT), 950–970 (LIFS…ISLF), 980–1000 (DSAV…LSLF), 1033–1053 (AQVF…AGVV), and 1063–1083 (TVIL…VLVA). Residues 1131-1271 (DFHIRPTNMS…MLHMIEKVQK (141 aa)) form an interaction with fem-3 region. The segment at 1143 to 1175 (YAPPPAKKRAKQTNNETDPEKKEDEPGTSNANN) is disordered. The chain crosses the membrane as a helical span at residues 1181–1201 (AAHRLAILPWHFVLGGIPVDL). Disordered regions lie at residues 1228–1252 (SELE…PAPE), 1275–1306 (EKEA…PSHR), and 1348–1384 (EMPP…PPHP). Positions 1275-1284 (EKEAKEKVHQ) are enriched in basic and acidic residues. The MX regulatory domain; required for tra-1 binding stretch occupies residues 1401-1422 (CEDVYWTYNDGRLPPNVAMPPR). A disordered region spans residues 1442–1485 (PPGQPSIPIPAEAMALREERARAHREQEQRDNSQSPSPSPEPGL). Residues 1456–1472 (ALREERARAHREQEQRD) show a composition bias toward basic and acidic residues.

In terms of assembly, interacts with tra-1 and fem-3. In terms of tissue distribution, somatic and germline tissues.

It is found in the membrane. In terms of biological role, plays a major role in controlling sexual cell fates. Promotes female development in XX animals where it sequesters one or more of the FEM proteins to the membrane thereby freeing the tra-1 protein (a putative transcription factor) to enter the nucleus and promote female development. In XO animals it acts as a receptor for her-1 which prevents it from binding to FEM proteins thereby repressing the activity of tra-1. Negatively regulates male development when bound to fem-3 and is required together with tra-1 for promoting spermatogenesis. This chain is Sex-determining transformer protein 2, found in Caenorhabditis remanei (Caenorhabditis vulgaris).